An 87-amino-acid chain; its full sequence is Guanine nucleotide-binding protein subunit gamma (87 aa).

Residue Cys-84 is modified to Cysteine methyl ester. The S-geranylgeranyl cysteine moiety is linked to residue Cys-84. A propeptide spans 85-87 (LLV) (removed in mature form).

Belongs to the G protein gamma family. G proteins are composed of 3 units, alpha, beta and gamma. In terms of processing, the N-terminus is blocked.

The protein localises to the cell membrane. In terms of biological role, guanine nucleotide-binding proteins (G proteins) are involved as a modulator or transducer in various transmembrane signaling systems. This major G-protein of the squid photoreceptor is involved in visual transduction. The beta and gamma chains are required for the GTPase activity, for replacement of GDP by GTP, and for G protein-effector interaction. The polypeptide is Guanine nucleotide-binding protein subunit gamma (Loligo forbesii (Veined squid)).